Reading from the N-terminus, the 544-residue chain is MRALSGPRLMLCGLLLLLFQAPCALGLAPLSRGHLCRTRPTDLVFVVDSSRSVRPVEFEKVKVFLSQVIESLDVGPNATRVGLVNYASSVKQEFPLRAHSSKAELLQAVRRIQPLSTGTMTGLAIQFAITKALSDAEGGRPRSPDISKVVIVVTDGRPQDSVRDVSARARAGGIELFAIGVGRVDKATLQQIASEPQDEHVDYVESYSVIEKLSKKFQEAFCLVSDLCATGDHDCEQVCVSSPGSYTCACREGFTLNSDGKTCNVCNGGGGSSATDLVFLIDGSKSVRPENFELVKKFINQIVDTLDVSDKLAQVGLVQYSSSVRQEFPLGRFHTKKDIKAAVRNMSYMEKGTMTGAALKYLIDNSFTVSSGARPGAQKVGIVFTDGRSQDYINDAAKKAKDLGFKMFAVGVGNAVEDELREIASEPVAEHYFYTADFKTINQIGKKLQKRICVEEDPCACESIVKFQTKVEGLLQALTRKHILSQKPLRGEGAVRRALWWRGGESLAPCVVGSGRLLLKTGWILAREAGLGFGTEKGEAETKS.

Residues 1-26 (MRALSGPRLMLCGLLLLLFQAPCALG) form the signal peptide. Positions 42 to 217 (DLVFVVDSSR…SVIEKLSKKF (176 aa)) constitute a VWFA 1 domain. N-linked (GlcNAc...) asparagine glycosylation occurs at asparagine 77. The region spanning 224–264 (VSDLCATGDHDCEQVCVSSPGSYTCACREGFTLNSDGKTCN) is the EGF-like domain. 3 cysteine pairs are disulfide-bonded: cysteine 228/cysteine 239, cysteine 235/cysteine 248, and cysteine 250/cysteine 263. Positions 276-448 (DLVFLIDGSK…KTINQIGKKL (173 aa)) constitute a VWFA 2 domain. Asparagine 345 carries an N-linked (GlcNAc...) asparagine glycan.

As to quaternary structure, homotrimer. Part of a complex composed of MATN1 (via VWFA1 domain), type 2 collagens and type 6 collagens. Forms a complex (via covalent bonds) with ACAN; the interaction increases in abundance with increasing age of the organism via an increase in occupancy of MATN1 binding sites. Interacts with COMP. Post-translationally, N-glycosylated; reduces binding affinity for type 2 collagens. Expressed in trachea from fetus into adulthood (at protein level).

It localises to the secreted. The protein localises to the extracellular space. The protein resides in the extracellular matrix. In terms of biological role, a major component of the extracellular matrix of non-articular cartilage. Binds to type 2 collagens and forms long concatenated protein networks as part of the extracellular matrix. Required for the network-like organization and bundling of collagen fibrils surrounding chondrocytes in the zones of maturation and hypertrophy. Required for mechanotransduction and adaption to mechanical loading in cartilage chondrocytes, resulting in an increase in expression of the extracellular matrix components ACAN and COL2A1. Acts as a moderator of angiogenesis in response to injury. The polypeptide is Matrilin-1 (Bos taurus (Bovine)).